The chain runs to 346 residues: Peroxidase 38 (346 aa).

Positions 1-22 are cleaved as a signal peptide; it reads MHSSLIKLGFLLLLLQVSLSHA. Glutamine 23 carries the post-translational modification Pyrrolidone carboxylic acid. Disulfide bonds link cysteine 33–cysteine 113, cysteine 66–cysteine 71, cysteine 119–cysteine 323, and cysteine 199–cysteine 231. The active-site Proton acceptor is the histidine 64. Residues aspartate 65, valine 68, glycine 70, aspartate 72, and serine 74 each coordinate Ca(2+). Asparagine 79 carries N-linked (GlcNAc...) asparagine glycosylation. Proline 161 is a substrate binding site. Position 192 (histidine 192) interacts with heme b. Threonine 193 provides a ligand contact to Ca(2+). N-linked (GlcNAc...) asparagine glycosylation occurs at asparagine 236. 3 residues coordinate Ca(2+): aspartate 244, threonine 247, and aspartate 252.

It belongs to the peroxidase family. Classical plant (class III) peroxidase subfamily. Heme b is required as a cofactor. Requires Ca(2+) as cofactor.

The protein resides in the secreted. Its subcellular location is the vacuole. The catalysed reaction is 2 a phenolic donor + H2O2 = 2 a phenolic radical donor + 2 H2O. Its function is as follows. Removal of H(2)O(2), oxidation of toxic reductants, biosynthesis and degradation of lignin, suberization, auxin catabolism, response to environmental stresses such as wounding, pathogen attack and oxidative stress. These functions might be dependent on each isozyme/isoform in each plant tissue. In Arabidopsis thaliana (Mouse-ear cress), this protein is Peroxidase 38 (PER38).